The chain runs to 425 residues: Serine--tRNA ligase (425 aa).

T230–E232 is an L-serine binding site. Residue R261–E263 participates in ATP binding. E284 contacts L-serine. Residue E348–S351 coordinates ATP. S384 contacts L-serine.

It belongs to the class-II aminoacyl-tRNA synthetase family. Type-1 seryl-tRNA synthetase subfamily. In terms of assembly, homodimer. The tRNA molecule binds across the dimer.

Its subcellular location is the cytoplasm. It catalyses the reaction tRNA(Ser) + L-serine + ATP = L-seryl-tRNA(Ser) + AMP + diphosphate + H(+). It carries out the reaction tRNA(Sec) + L-serine + ATP = L-seryl-tRNA(Sec) + AMP + diphosphate + H(+). The protein operates within aminoacyl-tRNA biosynthesis; selenocysteinyl-tRNA(Sec) biosynthesis; L-seryl-tRNA(Sec) from L-serine and tRNA(Sec): step 1/1. Catalyzes the attachment of serine to tRNA(Ser). Is also able to aminoacylate tRNA(Sec) with serine, to form the misacylated tRNA L-seryl-tRNA(Sec), which will be further converted into selenocysteinyl-tRNA(Sec). The protein is Serine--tRNA ligase of Streptococcus pyogenes serotype M12 (strain MGAS2096).